The sequence spans 510 residues: NAD(P)H-quinone oxidoreductase subunit 2, chloroplastic (510 aa).

12 helical membrane passes run 24-44 (LLLFHGSFIFPECILIFGLIL), 59-79 (WFYFISSTSLVMSITALLFRW), 99-119 (IFQFLILLCSTLCIPLSVEYI), 124-144 (MAITEFLLFVLTATLGGMFLC), 149-169 (LITIFVAPECFSLCSYLLSGY), 184-204 (LLMGGASSSILVHGFSWLYGL), 229-249 (ISIALISITVGIGFKLSPAPF), 295-315 (WHLLLEILAILSMILGNLIAI), 323-343 (MLAYSSIGQIGYVIIGIIVGD), 347-367 (GYASMITYMLFYISMNLGTFA), 395-415 (ALSLALCLLSLGGLPPLAGFF), and 418-438 (LHLFWCGWQAGLYFLVSIGLL).

It belongs to the complex I subunit 2 family. As to quaternary structure, NDH is composed of at least 16 different subunits, 5 of which are encoded in the nucleus.

Its subcellular location is the plastid. It is found in the chloroplast thylakoid membrane. The catalysed reaction is a plastoquinone + NADH + (n+1) H(+)(in) = a plastoquinol + NAD(+) + n H(+)(out). It catalyses the reaction a plastoquinone + NADPH + (n+1) H(+)(in) = a plastoquinol + NADP(+) + n H(+)(out). In terms of biological role, NDH shuttles electrons from NAD(P)H:plastoquinone, via FMN and iron-sulfur (Fe-S) centers, to quinones in the photosynthetic chain and possibly in a chloroplast respiratory chain. The immediate electron acceptor for the enzyme in this species is believed to be plastoquinone. Couples the redox reaction to proton translocation, and thus conserves the redox energy in a proton gradient. This is NAD(P)H-quinone oxidoreductase subunit 2, chloroplastic from Muilla maritima (Sea muilla).